The following is a 257-amino-acid chain: MPASMFSIDNILAARPRCKDSVLPVAPSAAAPVVFPALHGDSLYGASGGASSDYGAFYPRPVAPGGAGLPAAVSGSRLGYNNYFYGQLHVQAAPVGPACCGAVPPLGAQQCSCVPTPPGYEGPGSVLVSPVPHQMLPYMNVGTLSRTELQLLNQLHCRRKRRHRTIFTDEQLEALENLFQETKYPDVGTREQLARKVHLREEKVEVWFKNRRAKWRRQKRSSSEESENAEKWNKTSSSKASPEKREEEGKSDLDSDS.

The homeobox DNA-binding region spans 160-219 (KRRHRTIFTDEQLEALENLFQETKYPDVGTREQLARKVHLREEKVEVWFKNRRAKWRRQK). The segment at 213–257 (AKWRRQKRSSSEESENAEKWNKTSSSKASPEKREEEGKSDLDSDS) is disordered. Over residues 241 to 257 (SPEKREEEGKSDLDSDS) the composition is skewed to basic and acidic residues.

It belongs to the paired homeobox family. Bicoid subfamily.

Its subcellular location is the nucleus. Functionally, regulates chordin (CHRD). May play a role in spatial programing within discrete embryonic fields or lineage compartments during organogenesis. In concert with NKX3-2, plays a role in defining the structural components of the middle ear; required for the development of the entire tympanic ring. Probably involved in the regulatory networks that define neural crest cell fate specification and determine mesoderm cell lineages in mammals. This chain is Homeobox protein goosecoid (GSC), found in Gorilla gorilla gorilla (Western lowland gorilla).